Consider the following 172-residue polypeptide: Peptidyl-prolyl cis-trans isomerase (172 aa).

The PPIase cyclophilin-type domain occupies 7-170 (FFDMTVGGAP…KVVKVADCGQ (164 aa)).

It belongs to the cyclophilin-type PPIase family.

Its subcellular location is the cytoplasm. The enzyme catalyses [protein]-peptidylproline (omega=180) = [protein]-peptidylproline (omega=0). With respect to regulation, binds cyclosporin A (CsA). CsA mediates some of its effects via an inhibitory action on PPIase. Functionally, PPIases accelerate the folding of proteins. It catalyzes the cis-trans isomerization of proline imidic peptide bonds in oligopeptides. This Zea mays (Maize) protein is Peptidyl-prolyl cis-trans isomerase (CYP).